Here is a 293-residue protein sequence, read N- to C-terminus: Homoserine kinase (293 aa).

83-93 lines the ATP pocket; it reads RPKSGLGSSGA.

Belongs to the GHMP kinase family. Homoserine kinase subfamily.

It is found in the cytoplasm. The enzyme catalyses L-homoserine + ATP = O-phospho-L-homoserine + ADP + H(+). It functions in the pathway amino-acid biosynthesis; L-threonine biosynthesis; L-threonine from L-aspartate: step 4/5. In terms of biological role, catalyzes the ATP-dependent phosphorylation of L-homoserine to L-homoserine phosphate. The polypeptide is Homoserine kinase (Pyrococcus horikoshii (strain ATCC 700860 / DSM 12428 / JCM 9974 / NBRC 100139 / OT-3)).